A 506-amino-acid polypeptide reads, in one-letter code: Apolipoprotein N-acyltransferase (506 aa).

The next 6 helical transmembrane spans lie at 26–46 (FAPY…LILI), 66–86 (FASG…MPLA), 89–109 (LFLM…FTWS), 113–133 (FFAK…WLIA), 166–186 (GVEL…YAVI), and 192–212 (MLLI…WDWV). The 247-residue stretch at 225 to 471 (IQGNVDQNLK…TAVLRAELTP (247 aa)) folds into the CN hydrolase domain. The Proton acceptor role is filled by Glu264. The active site involves Lys330. Cys382 acts as the Nucleophile in catalysis. Residues 479-499 (HQLGSWPLYIWVALSLALAWW) traverse the membrane as a helical segment.

It belongs to the CN hydrolase family. Apolipoprotein N-acyltransferase subfamily.

The protein resides in the cell inner membrane. It catalyses the reaction N-terminal S-1,2-diacyl-sn-glyceryl-L-cysteinyl-[lipoprotein] + a glycerophospholipid = N-acyl-S-1,2-diacyl-sn-glyceryl-L-cysteinyl-[lipoprotein] + a 2-acyl-sn-glycero-3-phospholipid + H(+). Its pathway is protein modification; lipoprotein biosynthesis (N-acyl transfer). Catalyzes the phospholipid dependent N-acylation of the N-terminal cysteine of apolipoprotein, the last step in lipoprotein maturation. This chain is Apolipoprotein N-acyltransferase, found in Vibrio vulnificus (strain CMCP6).